Reading from the N-terminus, the 640-residue chain is RAP domain-containing protein, chloroplastic (640 aa).

A chloroplast-targeting transit peptide spans Met1–Ala32. The disordered stretch occupies residues Ser111 to Asp158. Residues Pro119–Lys136 are compositionally biased toward basic residues. The span at Lys137–Asp146 shows a compositional bias: basic and acidic residues. A compositionally biased stretch (acidic residues) spans Thr147 to Asp158. In terms of domain architecture, RAP spans Leu575 to Arg633.

In terms of tissue distribution, expressed in roots, leaf sheaths, veins of leaf blade, mature leaves, endodermis of culm, panicles and anthers.

It localises to the plastid. Its subcellular location is the chloroplast. Probable RNA-binding protein that plays an essential role in chloroplast development. Regulates the ribosomal proteins homeostasis and ribosomal RNA development in chloroplasts. Involved the regulation of 16S rRNA and required for the expression of chloroplast-associated photosynthetic genes. In Oryza sativa subsp. japonica (Rice), this protein is RAP domain-containing protein, chloroplastic.